Here is a 435-residue protein sequence, read N- to C-terminus: Tumor necrosis factor receptor superfamily member 3 (435 aa).

Residues 1–30 (MLLPWATSAPGLAWGPLVLGLFGLLAASQP) form the signal peptide. Over 31-227 (QAVPPYASEN…PPEMSGTMLM (197 aa)) the chain is Extracellular. N-linked (GlcNAc...) asparagine glycosylation occurs at Asn-40. TNFR-Cys repeat units lie at residues 42-81 (TCRDQEKEYYEPQHRICCSRCPPGTYVSAKCSRIRDTVCA), 82-124 (TCAE…KTQC), 125-168 (RCQP…NHCV), and 169-211 (PCKA…TTCK). 10 disulfides stabilise this stretch: Cys-43–Cys-58, Cys-59–Cys-72, Cys-62–Cys-80, Cys-83–Cys-98, Cys-101–Cys-116, Cys-104–Cys-124, Cys-126–Cys-132, Cys-139–Cys-148, Cys-142–Cys-167, and Cys-170–Cys-185. N-linked (GlcNAc...) asparagine glycosylation occurs at Asn-177. A helical membrane pass occupies residues 228–248 (LAVLLPLAFFLLLATVFSCIW). The Cytoplasmic portion of the chain corresponds to 249–435 (KSHPSLCRKL…GPRNQFITHD (187 aa)). A Phosphoserine modification is found at Ser-323. Residues 373-399 (PGPGDLPATPEPPYPIPEEGDPGPPGL) are compositionally biased toward pro residues. The tract at residues 373–435 (PGPGDLPATP…GPRNQFITHD (63 aa)) is disordered. Over residues 403-417 (HQEDGKAWHLAETEH) the composition is skewed to basic and acidic residues. The span at 421-435 (TPSNRGPRNQFITHD) shows a compositional bias: polar residues.

Self-associates; dimerization and trimerization are promoted by lymphotoxin (LTA(1)-LTB(2)). Associates with TRAF3. Associates with TRAF4. Associates with TRAF5. Interacts with Aedes aegypti lymphotoxin beta receptor inhibitor; the interaction reduces dimerization and trimerization of LTBR induced by lymphotoxin (LTA(1)-LTB(2)). As to quaternary structure, (Microbial infection) Interacts with HCV core protein.

The protein localises to the membrane. Functionally, receptor for the heterotrimeric lymphotoxin containing LTA and LTB, and for TNFS14/LIGHT. Activates NF-kappa-B signaling pathway upon stimulation with lymphotoxin (LTA(1)-LTB(2)). Promotes apoptosis via TRAF3 and TRAF5. May play a role in the development of lymphoid organs. The protein is Tumor necrosis factor receptor superfamily member 3 (LTBR) of Homo sapiens (Human).